The sequence spans 85 residues: Transcription factor 4 (85 aa).

The region spanning glutamate 7–leucine 60 is the bHLH domain. Residues glutamine 62–serine 85 are class A specific domain.

Efficient DNA binding requires dimerization with another bHLH protein. Forms homo- or heterooligomers with myogenin.

Its subcellular location is the nucleus. Its function is as follows. Transcription factor that binds to the immunoglobulin enhancer Mu-E5/KE5-motif. Involved in the initiation of neuronal differentiation. Binds to the E-box present in the somatostatin receptor 2 initiator element (SSTR2-INR) to activate transcription. This Gallus gallus (Chicken) protein is Transcription factor 4 (TCF4).